Here is a 131-residue protein sequence, read N- to C-terminus: Maturin (131 aa).

At Tyr34 the chain carries Phosphotyrosine. Acidic residues predominate over residues 107–120 (FEEYSADVEEEEPE). Positions 107 to 131 (FEEYSADVEEEEPEADHPQMGVSQQ) are disordered.

This sequence belongs to the MTURN family. Post-translationally, phosphorylation at Tyr-34 is essential for its ability to promote megakaryocyte differentiation. In terms of tissue distribution, expressed in the thymus, bone marrow and spleen.

Its subcellular location is the cytoplasm. Promotes megakaryocyte differentiation by enhancing ERK and JNK signaling as well as up-regulating RUNX1 and FLI1 expression. Represses NF-kappa-B transcriptional activity by inhibiting phosphorylation of RELA at 'Ser- 536'. May be involved in early neuronal development. The protein is Maturin (Mturn) of Mus musculus (Mouse).